Reading from the N-terminus, the 236-residue chain is Uridylate kinase (236 aa).

ATP is bound at residue 9–12; it reads KISG. UMP is bound at residue glycine 51. Residues glycine 52 and arginine 56 each coordinate ATP. Residues aspartate 71 and 132 to 139 contribute to the UMP site; that span reads TGNSHFTT. ATP-binding residues include tyrosine 166 and aspartate 169.

The protein belongs to the UMP kinase family. Homohexamer.

It localises to the cytoplasm. The enzyme catalyses UMP + ATP = UDP + ADP. Its pathway is pyrimidine metabolism; CTP biosynthesis via de novo pathway; UDP from UMP (UMPK route): step 1/1. Inhibited by UTP. Its function is as follows. Catalyzes the reversible phosphorylation of UMP to UDP. This is Uridylate kinase from Mycoplasmoides gallisepticum (strain R(low / passage 15 / clone 2)) (Mycoplasma gallisepticum).